Reading from the N-terminus, the 282-residue chain is Elongation factor Ts (282 aa).

Positions 81-84 (TDFV) are involved in Mg(2+) ion dislocation from EF-Tu. Positions 218-270 (KPAQPAQVAEVAAAPPAEPVADQPAAEPPAESVAPEPVVAESADAEPAPAAEG) are enriched in low complexity. The disordered stretch occupies residues 218–282 (KPAQPAQVAE…SKKGSTKKKK (65 aa)). Basic residues predominate over residues 273–282 (SKKGSTKKKK).

It belongs to the EF-Ts family.

It is found in the cytoplasm. Functionally, associates with the EF-Tu.GDP complex and induces the exchange of GDP to GTP. It remains bound to the aminoacyl-tRNA.EF-Tu.GTP complex up to the GTP hydrolysis stage on the ribosome. The polypeptide is Elongation factor Ts (Synechococcus sp. (strain JA-3-3Ab) (Cyanobacteria bacterium Yellowstone A-Prime)).